The sequence spans 166 residues: 2-C-methyl-D-erythritol 2,4-cyclodiphosphate synthase (166 aa).

Asp12 and His14 together coordinate a divalent metal cation. 4-CDP-2-C-methyl-D-erythritol 2-phosphate contacts are provided by residues 12–14 (DVH) and 38–39 (HS). His46 provides a ligand contact to a divalent metal cation. 4-CDP-2-C-methyl-D-erythritol 2-phosphate-binding positions include 60 to 62 (DIG), 136 to 139 (TTSE), Phe143, and Arg146.

The protein belongs to the IspF family. As to quaternary structure, homotrimer. Requires a divalent metal cation as cofactor.

The catalysed reaction is 4-CDP-2-C-methyl-D-erythritol 2-phosphate = 2-C-methyl-D-erythritol 2,4-cyclic diphosphate + CMP. The protein operates within isoprenoid biosynthesis; isopentenyl diphosphate biosynthesis via DXP pathway; isopentenyl diphosphate from 1-deoxy-D-xylulose 5-phosphate: step 4/6. Involved in the biosynthesis of isopentenyl diphosphate (IPP) and dimethylallyl diphosphate (DMAPP), two major building blocks of isoprenoid compounds. Catalyzes the conversion of 4-diphosphocytidyl-2-C-methyl-D-erythritol 2-phosphate (CDP-ME2P) to 2-C-methyl-D-erythritol 2,4-cyclodiphosphate (ME-CPP) with a corresponding release of cytidine 5-monophosphate (CMP). The chain is 2-C-methyl-D-erythritol 2,4-cyclodiphosphate synthase from Xanthomonas axonopodis pv. citri (strain 306).